The chain runs to 732 residues: MSPSGPNLNNKEHNRASEKKNSRTHNKKTNRNQSKEKPVSSRSVETPKNAVCLEPVGTDPVSNVATVDASKEEQDEDEQICFICAEGITYSCVLPCNHRMCHVCALRLRALYKTKECTFCKTEWDTVLITKDHEIDIHDVDLAKLPFQDEKLGIVYSDEHAQEESNLLLQFNCPEDACDITCKGWFDLKLHAKVKHHKFFCDLCVKNKKVFTHEHTLFSKKGLTKHNEVGDQGSDLEITGFKGHPKCEFCNTHFYDDDELFKHCREKHERCYICDQVAGRPTHQYFKNYDSLERHFEKDHYICRERECLERKFVVFGTEIDLKAHQLDEHPHNFTQRELREARRIIPQFSYDPPGASGRNRRERTSSTPSEQSTSVNETANSLSNLHLSRGEIAHLRQEEYVREQQARHRDFGFTLSNPAPTSARPATSTRTISRGKTRTLRNEDFPSLAEVANQNSSSAPSVPVSAPRLSGKSASRNHVPSPPKGTKSPMASSEQAQHQQVIDRMQKLTNYDDHKINDFKFAVSSFRGNVMPAREAVARITKLVAKPHEQLSGVFNQIANLLENKEKSRELLEAWQEWKILNAKDDTRIGTTNSNLLRLKRSNRTAAQTASVWNRIERAAAHDGPSLSAPSSSINLANITSRPTNSSAANTPSWGVRKARASALNARSEEDFPALPPSTSKRISVQLGKKQARPVDSWGSTPNTSSNRNSNTMGVSKKKNGKKQTVLFHIG.

A disordered region spans residues 1-48 (MSPSGPNLNNKEHNRASEKKNSRTHNKKTNRNQSKEKPVSSRSVETPK). Residues 10-21 (NKEHNRASEKKN) show a composition bias toward basic and acidic residues. An RING-type zinc finger spans residues 81–121 (CFICAEGITYSCVLPCNHRMCHVCALRLRALYKTKECTFCK). The region spanning 245–315 (PKCEFCNTHF…RECLERKFVV (71 aa)) is the LIM zinc-binding domain. Disordered regions lie at residues 345-380 (IIPQ…NETA), 411-501 (DFGF…QHQQ), and 623-732 (HDGP…FHIG). Polar residues-rich tracts occupy residues 366–380 (SSTP…NETA) and 415–433 (TLSN…TRTI). Positions 457 to 468 (SSSAPSVPVSAP) are enriched in low complexity. A Phosphoserine modification is found at serine 482. Polar residues-rich tracts occupy residues 490 to 501 (PMASSEQAQHQQ) and 629 to 654 (SAPS…NTPS). The segment covering 701 to 713 (STPNTSSNRNSNT) has biased composition (low complexity).

The protein belongs to the ZNF598/HEL2 family.

Its subcellular location is the cytoplasm. It carries out the reaction S-ubiquitinyl-[E2 ubiquitin-conjugating enzyme]-L-cysteine + [acceptor protein]-L-lysine = [E2 ubiquitin-conjugating enzyme]-L-cysteine + N(6)-ubiquitinyl-[acceptor protein]-L-lysine.. It participates in protein modification; protein ubiquitination. E3 ubiquitin-protein ligase that plays a key role in the ribosome quality control (RQC), a pathway that takes place when a ribosome has stalled during translation, leading to degradation of nascent peptide chains. Activated when ribosomes are stalled within an mRNA following translation of prematurely polyadenylated mRNAs. Acts as a ribosome collision sensor: specifically recognizes and binds collided ribosome and ubiquitinates the 40S ribosomal proteins rps20/uS10 and rps3/uS3. Catalyzes 'Lys-63'-linked polyubiquitination of rps20/uS10, promoting recruitment of the RQT (ribosome quality control trigger) complex, which drives the disassembly of stalled ribosomes, followed by degradation of nascent peptides. The polypeptide is E3 ubiquitin-protein ligase hel2 (Schizosaccharomyces pombe (strain 972 / ATCC 24843) (Fission yeast)).